The chain runs to 305 residues: tRNA N6-adenosine threonylcarbamoyltransferase (305 aa).

2 residues coordinate Fe cation: H108 and H112. Substrate is bound by residues 130–134 (VVSGG), D163, G176, D180, and N264. Fe cation is bound at residue D288.

The protein belongs to the KAE1 / TsaD family. The cofactor is Fe(2+).

It is found in the cytoplasm. It catalyses the reaction L-threonylcarbamoyladenylate + adenosine(37) in tRNA = N(6)-L-threonylcarbamoyladenosine(37) in tRNA + AMP + H(+). In terms of biological role, required for the formation of a threonylcarbamoyl group on adenosine at position 37 (t(6)A37) in tRNAs that read codons beginning with adenine. Is involved in the transfer of the threonylcarbamoyl moiety of threonylcarbamoyl-AMP (TC-AMP) to the N6 group of A37, together with TsaE and TsaB. TsaD likely plays a direct catalytic role in this reaction. This chain is tRNA N6-adenosine threonylcarbamoyltransferase, found in Mycoplasma mobile (strain ATCC 43663 / 163K / NCTC 11711) (Mesomycoplasma mobile).